A 360-amino-acid chain; its full sequence is Spore germination protein GerQB (360 aa).

10 consecutive transmembrane segments (helical) span residues 11 to 31, 45 to 65, 84 to 104, 116 to 136, 142 to 162, 188 to 208, 220 to 240, 270 to 290, 300 to 320, and 331 to 351; these read SPYM…MLGF, ISTL…YQIL, IGGL…ATTL, FPSI…YYIV, VVAG…FTFF, MKGN…YPFI, YANL…LAFF, IIVS…LWGV, IKQK…SFFL, and TWTG…LWLI.

Belongs to the amino acid-polyamine-organocation (APC) superfamily. Spore germination protein (SGP) (TC 2.A.3.9) family.

The protein localises to the membrane. Functionally, required for the germination response to inosine. Has no role in L-alanine germination. The protein is Spore germination protein GerQB (gerQB) of Bacillus cereus.